A 666-amino-acid chain; its full sequence is Frizzled-3 (666 aa).

The signal sequence occupies residues 1–22 (MAMTWIVFSLWPLTVFMGHIGG). In terms of domain architecture, FZ spans 23-136 (HSLFSCEPIT…CSRFPDCDEP (114 aa)). Over 23 to 205 (HSLFSCEPIT…REELSFARYF (183 aa)) the chain is Extracellular. Disulfide bonds link C28–C89, C36–C82, C73–C110, C99–C133, and C103–C127. N42 carries an N-linked (GlcNAc...) asparagine glycan. The chain crosses the membrane as a helical span at residues 206–226 (IGLISIICLSATLFTFLTFLI). Residues 227–237 (DVTRFRYPERP) are Cytoplasmic-facing. A helical transmembrane segment spans residues 238–258 (IIFYAVCYMMVSLIFFIGFLL). The Extracellular segment spans residues 259–288 (EDRVACNASIPAQYKASTVTQGSHNKACTM). N265 carries N-linked (GlcNAc...) asparagine glycosylation. A helical membrane pass occupies residues 289 to 309 (LFMILYFFTMAGSVWWVILTI). Residues 310–328 (TWFLAAVPKWGSEAIEKKA) are Cytoplasmic-facing. Residues 329–349 (LLFHASAWGIPGTLTIILLAM) form a helical membrane-spanning segment. The Extracellular segment spans residues 350–374 (NKIEGDNISGVCFVGLYDVDALRYF). N356 carries an N-linked (GlcNAc...) asparagine glycan. A helical transmembrane segment spans residues 375 to 395 (VLAPLCLYVVVGVSLLLAGII). Residues 396–420 (SLNRVRIEIPLEKENQDKLVKFMIR) lie on the Cytoplasmic side of the membrane. A helical transmembrane segment spans residues 421 to 441 (IGVFSILYLVPLLVVIGCYFY). Residues 442 to 477 (EQAYRGIWETTWIQERCREYHIPCPYQVTQMSRPDL) are Extracellular-facing. A helical membrane pass occupies residues 478–498 (ILFLMKYLMALIVGIPSVFWV). Over 499 to 666 (GSKKTCFEWA…RVIEEDGTSA (168 aa)) the chain is Cytoplasmic. The Lys-Thr-X-X-X-Trp motif, mediates interaction with the PDZ domain of Dvl family members motif lies at 502-507 (KTCFEW). The tract at residues 538 to 666 (RDPNTPIIRK…RVIEEDGTSA (129 aa)) is disordered. Residues 550–565 (GTSTQGTSTHASSTQL) are compositionally biased toward polar residues. Residues 617-638 (LTDHSRHSSSHRLNEQSRHSSI) are compositionally biased toward basic and acidic residues. Polar residues predominate over residues 639 to 656 (RDLSNNPMTHITHGTSMN).

The protein belongs to the G-protein coupled receptor Fz/Smo family. As to quaternary structure, interacts with VANGL2. In terms of processing, ubiquitinated by ZNRF3, leading to its degradation by the proteasome. Widely expressed. Relatively high expression in the CNS, including regions of the limbic system, in kidney, pancreas, skeletal muscle, uterus and testis.

It localises to the membrane. Its subcellular location is the cell membrane. The protein resides in the cell surface. The protein localises to the apical cell membrane. Functionally, receptor for Wnt proteins. Most of frizzled receptors are coupled to the beta-catenin canonical signaling pathway, which leads to the activation of disheveled proteins, inhibition of GSK-3 kinase, nuclear accumulation of beta-catenin and activation of Wnt target genes. A second signaling pathway involving PKC and calcium fluxes has been seen for some family members, but it is not yet clear if it represents a distinct pathway or if it can be integrated in the canonical pathway, as PKC seems to be required for Wnt-mediated inactivation of GSK-3 kinase. Both pathways seem to involve interactions with G-proteins. Activation by Wnt5A stimulates PKC activity via a G-protein-dependent mechanism. Involved in transduction and intercellular transmission of polarity information during tissue morphogenesis and/or in differentiated tissues. Plays a role in controlling early axon growth and guidance processes necessary for the formation of a subset of central and peripheral major fiber tracts. Required for the development of major fiber tracts in the central nervous system, including: the anterior commissure, the corpus callosum, the thalamocortical, corticothalamic and nigrostriatal tracts, the corticospinal tract, the fasciculus retroflexus, the mammillothalamic tract, the medial lemniscus, and ascending fiber tracts from the spinal cord to the brain. In the peripheral nervous system, controls axon growth in distinct populations of cranial and spinal motor neurons, including the facial branchimotor nerve, the hypoglossal nerve, the phrenic nerve, and motor nerves innervating dorsal limbs. Involved in the migration of cranial neural crest cells. May also be implicated in the transmission of sensory information from the trunk and limbs to the brain. Controls commissural sensory axons guidance after midline crossing along the anterior-posterior axis in the developing spinal cord in a Wnt-dependent signaling pathway. Together with FZD6, is involved in the neural tube closure and plays a role in the regulation of the establishment of planar cell polarity (PCP), particularly in the orientation of asymmetric bundles of stereocilia on the apical faces of a subset of auditory and vestibular sensory cells located in the inner ear. Promotes neurogenesis by maintaining sympathetic neuroblasts within the cell cycle in a beta-catenin-dependent manner. The protein is Frizzled-3 (FZD3) of Homo sapiens (Human).